Reading from the N-terminus, the 1155-residue chain is MSTWHLFSDSSGDGFRWEVAGRILQSVSDSTPTKALESTAPLPSMADLLLQGCSKLIEREESMPGEIPMFRTGLGKSVVLKESSIAKAKSILAENVAYSDLQNTNCSIPQTRQVDTAETMPMFRTALGKTVPLKESSIAKPLSILGSDMIIDSDNVLPRESGFGVPNSLFQTASNKKVNVSSAGLARAKALLGLEEDDLNGFNHVNQSSSSLQQHGWSGLKTHEEFDATVVKHHSGTPGQYENYVSGKRSEILNPSLKVPPTKFQTAGGKSLSVSAEALKRARNLLGDPELGSFFDDVAGGDQFFTPQKDERLSDIAINNGSVNTGYIAHEEKTSNKHTSNSFVSPLHSSSKQFRSVNLENLASGGNLIKKFDTAVDETNCALNISKPATHGLSNNRPLASDMAVNNSKGNGFIPRARQLGRPADQPLVDITNRRDTAYANNKQDSTQKKRLGKTVSVSPFKRPRISSFKTPLKKNAQQASSGLSVVSCDTLTSKKVLSTRYPEKSPRVYIKEFFGMHPTATTRMDYVPDHVRRIKSSNADKYVFCDESSSNKVGAETFLQMLAESGASLQHASRKWVTNHYRWIVWKLACYDIYYPAKCRGNFLTITNVLEELKYRYEREVNHGHCSAIKRILSGDAPASSMMVLCISAINPRTDNGSQEAHCSDNCSNVKVELTDGWYSMNAALDVVLTKQLNAGKLFVGQKLRILGAGLSGWATPTSPLEAVISSTICLLLNINGTYRAHWADRLGFCKEIGVPLAFNCIKCNGGPVPKTLAGITRIYPILYKERLGEKKSIVRSERIESRIIQLHNQRRSALVEGIMCEYQRGINGVHSQNDTDSEEGAKVFKLLETAAEPELLMAEMSLEQLTSFTTYKAKFEAAKQMQMEKSVAKALEDAGLGERNVTPFMRIRLVGLTSLSNEGEHNPKEGIVTIWDPTERQRTELTEGKIYIMKGLVPMNSDSETLYLHARGSSSRWQPLSPKDSENFQPFFNPRKPISLSNLGEIPLSSEFDIAAYVVYVGDAYTDVLQKKQWVFVTDGSTQHSGEISNSLLAISFSTPFMDDSSVSHISHNLVGSVVGFCNLIKRAKDATNEMWVAETTENSVYFINAEAAYSSHLKTRSAHIQTWAKLYSSKSVIHELRQRVLFIIGACKSPSC.

4 BRCA2 repeats span residues 63–97 (MPGE…ENVA), 116–150 (TAET…SDMI), 163–197 (FGVP…LEED), and 257–291 (LKVP…DPEL).

Interacts with RAD51 and DMC1. Interacts with DSS1(I) and DSS1(V). Can interact with both RAD51 and DSS1(I) or both DMC1 and DSS1(I) in a tripartite complex. As to expression, expressed in flower buds.

In terms of biological role, involved in double-strand break repair and/or homologous recombination by mediating RAD51- and DMC1-facilitated DNA repair. Plays an essential role in both somatic and meiotic homologous recombination. Is crucial for the formation of RAD51 and DMC1 foci during male meiotic homologous recombination in prophase I. In Arabidopsis thaliana (Mouse-ear cress), this protein is Protein BREAST CANCER SUSCEPTIBILITY 2 homolog B.